Reading from the N-terminus, the 428-residue chain is Glutamate-1-semialdehyde 2,1-aminomutase (428 aa).

The residue at position 265 (K265) is an N6-(pyridoxal phosphate)lysine.

Belongs to the class-III pyridoxal-phosphate-dependent aminotransferase family. HemL subfamily. As to quaternary structure, homodimer. It depends on pyridoxal 5'-phosphate as a cofactor.

The protein localises to the cytoplasm. It catalyses the reaction (S)-4-amino-5-oxopentanoate = 5-aminolevulinate. Its pathway is porphyrin-containing compound metabolism; protoporphyrin-IX biosynthesis; 5-aminolevulinate from L-glutamyl-tRNA(Glu): step 2/2. This is Glutamate-1-semialdehyde 2,1-aminomutase from Aeromonas hydrophila subsp. hydrophila (strain ATCC 7966 / DSM 30187 / BCRC 13018 / CCUG 14551 / JCM 1027 / KCTC 2358 / NCIMB 9240 / NCTC 8049).